The following is a 932-amino-acid chain: DNA mismatch repair protein MutS (932 aa).

ATP is bound at residue 615-622 (GPNMAGKS).

The protein belongs to the DNA mismatch repair MutS family.

In terms of biological role, this protein is involved in the repair of mismatches in DNA. It is possible that it carries out the mismatch recognition step. This protein has a weak ATPase activity. The chain is DNA mismatch repair protein MutS from Clostridium botulinum (strain Okra / Type B1).